The sequence spans 529 residues: Peptide chain release factor 3 (529 aa).

One can recognise a tr-type G domain in the interval 11 to 280 (KKRRTFAIIS…GLVEWAPAPL (270 aa)). GTP contacts are provided by residues 20-27 (SHPDAGKT), 88-92 (DTPGH), and 142-145 (NKLD).

This sequence belongs to the TRAFAC class translation factor GTPase superfamily. Classic translation factor GTPase family. PrfC subfamily.

The protein localises to the cytoplasm. In terms of biological role, increases the formation of ribosomal termination complexes and stimulates activities of RF-1 and RF-2. It binds guanine nucleotides and has strong preference for UGA stop codons. It may interact directly with the ribosome. The stimulation of RF-1 and RF-2 is significantly reduced by GTP and GDP, but not by GMP. This chain is Peptide chain release factor 3, found in Alteromonas mediterranea (strain DSM 17117 / CIP 110805 / LMG 28347 / Deep ecotype).